The chain runs to 649 residues: MQCLGAEHLDSAERIPTQRQWRPQIYRKCTDTAWLFLFFLFWTGLVFIMGYSVAAGATGRLLFGYDSFGNVCGKKNSPVEGAPLSGQDMTQKKHVFFMNSCNLEVKDVRLSSTVLCVSSCPEEQLDTLEEVQLFANTSGSFLCVYNLNSFNYTQIPNADLLCPRLPVPPSKSFPLFNRCIPQTPECYSLFASVLINDVDSLHRILSGIMSGRDTVLGLCILAFALSLAMMFTFRFITTLLVHIFIALIVLGLLFVCSVLWWLYYDYTNDLSIELDTERENMKCLLGFAIVSTVITAVLLILIYVLRKRIKLTVELLQVTNKAISSSPFLLFQPLWTFAILIFFWVLWVAVLLSLGTAGAAQVVEGGQVEYKPLSGIRYMWWYHLIGLIWTSEFILACQQMAVAGTVVTCYFNRNKSDPPDRPILSSLSILFCYHQGTVVKGSFLITVVRIPRAVLMYVYNTLKEKDGALSRCVSQCCCCCFWCLDKCLRHLNQNAYTTTAINGTDFCTSAKDALKLLSKNSSHFTSVNCFGDFIIFLGKVLVVCFTVFGGLMAFNYHRVLQVWAVPLLLVAFFAYLVAHSFLSVFETVLDALFLCFAVDLETNDGSSEKPYFMDQEFLNFVKRINKLNTRAQRNKNSLTSEEGTELRPL.

The chain crosses the membrane as a helical span at residues 33 to 53 (AWLFLFFLFWTGLVFIMGYSV). 2 N-linked (GlcNAc...) asparagine glycosylation sites follow: N136 and N151. The next 5 helical transmembrane spans lie at 213 to 233 (DTVLGLCILAFALSLAMMFTF), 235 to 255 (FITTLLVHIFIALIVLGLLFV), 284 to 304 (LLGFAIVSTVITAVLLILIYV), 334 to 354 (LWTFAILIFFWVLWVAVLLSL), and 384 to 404 (LIGLIWTSEFILACQQMAVAG). N-linked (GlcNAc...) asparagine glycans are attached at residues N414, N502, and N520. The next 2 helical transmembrane spans lie at 533–553 (FIIFLGKVLVVCFTVFGGLMA) and 562–582 (VWAVPLLLVAFFAYLVAHSFL).

This sequence belongs to the CTL (choline transporter-like) family.

The protein localises to the membrane. The chain is Choline transporter-like protein 3 (SLC44A3) from Bos taurus (Bovine).